Reading from the N-terminus, the 397-residue chain is Argininosuccinate synthase (397 aa).

9-17 (AYSGGLDTS) serves as a coordination point for ATP. Y86 lines the L-citrulline pocket. Position 116 (G116) interacts with ATP. 3 residues coordinate L-aspartate: T118, N122, and D123. N122 lines the L-citrulline pocket. Residues R126, S174, E259, and Y271 each contribute to the L-citrulline site.

It belongs to the argininosuccinate synthase family. Type 1 subfamily. In terms of assembly, homotetramer.

Its subcellular location is the cytoplasm. It catalyses the reaction L-citrulline + L-aspartate + ATP = 2-(N(omega)-L-arginino)succinate + AMP + diphosphate + H(+). Its pathway is amino-acid biosynthesis; L-arginine biosynthesis; L-arginine from L-ornithine and carbamoyl phosphate: step 2/3. This Lactococcus lactis subsp. cremoris (strain MG1363) protein is Argininosuccinate synthase.